A 556-amino-acid chain; its full sequence is Formate--tetrahydrofolate ligase (556 aa).

Threonine 65–threonine 72 lines the ATP pocket.

Belongs to the formate--tetrahydrofolate ligase family.

It catalyses the reaction (6S)-5,6,7,8-tetrahydrofolate + formate + ATP = (6R)-10-formyltetrahydrofolate + ADP + phosphate. Its pathway is one-carbon metabolism; tetrahydrofolate interconversion. The chain is Formate--tetrahydrofolate ligase from Lachnoclostridium phytofermentans (strain ATCC 700394 / DSM 18823 / ISDg) (Clostridium phytofermentans).